We begin with the raw amino-acid sequence, 251 residues long: tRNA (guanine-N(1)-)-methyltransferase (251 aa).

S-adenosyl-L-methionine contacts are provided by residues Gly113 and 133–138 (MGDYVL).

The protein belongs to the RNA methyltransferase TrmD family. As to quaternary structure, homodimer.

It is found in the cytoplasm. It carries out the reaction guanosine(37) in tRNA + S-adenosyl-L-methionine = N(1)-methylguanosine(37) in tRNA + S-adenosyl-L-homocysteine + H(+). In terms of biological role, specifically methylates guanosine-37 in various tRNAs. The protein is tRNA (guanine-N(1)-)-methyltransferase of Sodalis glossinidius (strain morsitans).